Reading from the N-terminus, the 119-residue chain is Large ribosomal subunit protein uL14 (119 aa).

Belongs to the universal ribosomal protein uL14 family. In terms of assembly, part of the 50S ribosomal subunit. Forms a cluster with proteins L3 and L19. In the 70S ribosome, L14 and L19 interact and together make contacts with the 16S rRNA in bridges B5 and B8.

Functionally, binds to 23S rRNA. Forms part of two intersubunit bridges in the 70S ribosome. The polypeptide is Large ribosomal subunit protein uL14 (Wolbachia pipientis wMel).